The chain runs to 265 residues: 14-3-3-like protein GF14-D (265 aa).

Positions 244–265 (DANDDGGDEIKEAAAPKEPGDQ) are disordered. Basic and acidic residues predominate over residues 251-265 (DEIKEAAAPKEPGDQ).

Belongs to the 14-3-3 family. As to quaternary structure, interacts with BZR1. Interacts with ABI5.

Functionally, is associated with a DNA binding complex that binds to the G box, a well-characterized cis-acting DNA regulatory element found in plant genes. The protein is 14-3-3-like protein GF14-D (GF14D) of Oryza sativa subsp. japonica (Rice).